The chain runs to 234 residues: Toxic shock syndrome toxin-1 (234 aa).

The N-terminal stretch at 1–40 (MNKKLLMNFFIVSPLLLATTATDFTPVPLSSNQIIKTAKA) is a signal peptide.

It belongs to the staphylococcal/streptococcal toxin family.

Its subcellular location is the secreted. Its function is as follows. Responsible for the symptoms of toxic shock syndrome. This Staphylococcus aureus protein is Toxic shock syndrome toxin-1 (tst).